Consider the following 347-residue polypeptide: N-acetyl-gamma-glutamyl-phosphate reductase (347 aa).

Residue cysteine 153 is part of the active site.

This sequence belongs to the NAGSA dehydrogenase family. Type 1 subfamily.

It is found in the cytoplasm. The catalysed reaction is N-acetyl-L-glutamate 5-semialdehyde + phosphate + NADP(+) = N-acetyl-L-glutamyl 5-phosphate + NADPH + H(+). It functions in the pathway amino-acid biosynthesis; L-arginine biosynthesis; N(2)-acetyl-L-ornithine from L-glutamate: step 3/4. In terms of biological role, catalyzes the NADPH-dependent reduction of N-acetyl-5-glutamyl phosphate to yield N-acetyl-L-glutamate 5-semialdehyde. The chain is N-acetyl-gamma-glutamyl-phosphate reductase from Mycobacterium avium (strain 104).